A 349-amino-acid chain; its full sequence is MKLTKLALCTLFGLGVSIANAADLPNITILATGGTIAGSGQSSVNSAYKAGQLSIDTLIEAVPEMKNIANIKGEQIVKIGSQDMNDEVWLKLAKAINAQCKSTDGFVITHGTDTMEETAYFLDLTVKCEKPVVLVGAMRPATEKSADGPLNLYNAVVVAADKKSSGRGVLVAMNNEVLGARDVTKTSTTAVQTFHSPNYGSLGYIHNSKVDYERSPESKHTINTPFNVEKLDSLPKVGIIYAYSNAPVEPLNALLNAGYQGIVSAGVGNGNVNAAHLDRLEKAAKDSVVVVRSSRVPTGYTTRDAEVDDSKYGFVASGTLNPQKARVLLQLALTQTKDPKVIQQYFEDF.

The first 21 residues, 1 to 21 (MKLTKLALCTLFGLGVSIANA), serve as a signal peptide directing secretion. One can recognise an Asparaginase/glutaminase domain in the interval 25–349 (PNITILATGG…KVIQQYFEDF (325 aa)). Catalysis depends on T35, which acts as the O-isoaspartyl threonine intermediate. Substrate contacts are provided by residues S81 and 112–113 (TD). C100 and C128 form a disulfide bridge.

It belongs to the asparaginase 1 family.

The protein localises to the periplasm. The catalysed reaction is L-asparagine + H2O = L-aspartate + NH4(+). In Haemophilus influenzae (strain ATCC 51907 / DSM 11121 / KW20 / Rd), this protein is Probable L-asparaginase periplasmic (ansB).